A 152-amino-acid polypeptide reads, in one-letter code: Large ribosomal subunit protein uL15 (152 aa).

Residues 1–57 (MTSTLNTLKSNSGSRKKKLRKGRGIAAGQGASCGFGMRGQKSRSGRPTRPGFEGGQM) are disordered. A compositionally biased stretch (basic residues) spans 14–23 (SRKKKLRKGR). A compositionally biased stretch (gly residues) spans 25-37 (IAAGQGASCGFGM).

Belongs to the universal ribosomal protein uL15 family. Part of the 50S ribosomal subunit.

In terms of biological role, binds to the 23S rRNA. The chain is Large ribosomal subunit protein uL15 from Prochlorococcus marinus (strain AS9601).